We begin with the raw amino-acid sequence, 201 residues long: L(+)-tartrate dehydratase subunit beta (201 aa).

His-37 is an active-site residue.

It belongs to the class-I fumarase family. As to quaternary structure, heterotetramer of two alpha and two beta subunits.

It catalyses the reaction (2R,3R)-tartrate = oxaloacetate + H2O. This is L(+)-tartrate dehydratase subunit beta (ttdB) from Shigella boydii serotype 4 (strain Sb227).